The chain runs to 427 residues: MSAIVDIIGREIIDSRGNPTVECDVLLESGVMGRASVPSGASTGSREAIELRDGDKNRYFGKGVLKACENINTEISEAIMGLDANEQAFLDRTLIDLDGTDNKARLGANATLAVSMAVAKAAAEESGLPLYRYFGGSGAMQMPVPMMNVINGGAHANNNLDLQEFMIIPVGAPSFREAIRYGAEVFHTLKKIINDKGLPTSVGDEGGFAPSVENHEAAIKMILQAIEQAGYEPGTQIALGLDCAASEFYKDGKYHLAGEGMSLSSADFTNLLGTWCDKYPIISIEDGMAENDWDGWATLTNALGKKVQLVGDDLFVTNTKILREGIQKNVANSILIKINQIGTLTETFAAIEMAKRAGYTAVISHRSGETEDSTIADIAVGTNSLQIKTGSMSRSDRMAKYNQLLRIEEDLGDIASYPGRNAFYNLK.

Q163 serves as a coordination point for (2R)-2-phosphoglycerate. The Proton donor role is filled by E205. 3 residues coordinate Mg(2+): D242, E285, and D312. Residues K337, R366, S367, and K388 each coordinate (2R)-2-phosphoglycerate. The active-site Proton acceptor is K337.

It belongs to the enolase family. Mg(2+) is required as a cofactor.

It is found in the cytoplasm. The protein localises to the secreted. It localises to the cell surface. It catalyses the reaction (2R)-2-phosphoglycerate = phosphoenolpyruvate + H2O. It functions in the pathway carbohydrate degradation; glycolysis; pyruvate from D-glyceraldehyde 3-phosphate: step 4/5. Catalyzes the reversible conversion of 2-phosphoglycerate (2-PG) into phosphoenolpyruvate (PEP). It is essential for the degradation of carbohydrates via glycolysis. The chain is Enolase from Herminiimonas arsenicoxydans.